Consider the following 271-residue polypeptide: Ubiquitin thioesterase OTUB1 (271 aa).

The residue at position 2 (alanine 2) is an N-acetylalanine. Residue serine 16 is modified to Phosphoserine. Tyrosine 26 carries the post-translational modification Phosphotyrosine; by SRC. In terms of domain architecture, OTU spans 80–271; sequence SYIRKTRPDG…RPGHYDILYK (192 aa). Aspartate 88 is a catalytic residue. Cysteine 91 acts as the Nucleophile in catalysis. Ubiquitin-conjugating enzyme E2 binding regions lie at residues 130 to 138 and 169 to 177; these read FTEFTIEDF and DYLVVYLRL. The tract at residues 189-195 is free ubiquitin binding; that stretch reads FFEHFIE. A ubiquitin-conjugating enzyme E2 binding region spans residues 206 to 213; sequence QEVEPMCK. 2 free ubiquitin binding regions span residues 214 to 221 and 245 to 251; these read ESDHIHII and NPHIFPE. Residue histidine 265 is part of the active site.

This sequence belongs to the peptidase C65 family. As to quaternary structure, interacts with FUS and RACK1. Interacts with UBE2D1/UBCH5A, UBE2W/UBC16 and UBE2N/UBC13. In terms of assembly, interacts with RNF128. Forms a ternary complex with RNF128 and USP8. Interacts with the C-terminal UCH catalytic domain of USP8. Interacts with RNF128. Does not associate with USP8. Phosphorylation at Tyr-26 by SRC and SRMS promotes deubiquitination of RPTOR via a non-catalytic process. Isoform 1 is ubiquitous. Isoform 2 is expressed only in lymphoid tissues such as tonsils, lymph nodes and spleen, as well as peripheral blood mononuclear cells.

It is found in the cytoplasm. It carries out the reaction Thiol-dependent hydrolysis of ester, thioester, amide, peptide and isopeptide bonds formed by the C-terminal Gly of ubiquitin (a 76-residue protein attached to proteins as an intracellular targeting signal).. By free ubiquitin: binding of free ubiquitin triggers conformational changes in the OTU domain and formation of a ubiquitin-binding helix in the N-terminus, promoting binding of the conjugated donor ubiquitin in UBE2N/UBC13 to OTUB1. In terms of biological role, hydrolase that can specifically remove 'Lys-48'-linked conjugated ubiquitin from proteins and plays an important regulatory role at the level of protein turnover by preventing degradation. Regulator of T-cell anergy, a phenomenon that occurs when T-cells are rendered unresponsive to antigen rechallenge and no longer respond to their cognate antigen. Acts via its interaction with RNF128/GRAIL, a crucial inductor of CD4 T-cell anergy. Isoform 1 destabilizes RNF128, leading to prevent anergy. In contrast, isoform 2 stabilizes RNF128 and promotes anergy. Surprisingly, it regulates RNF128-mediated ubiquitination, but does not deubiquitinate polyubiquitinated RNF128. Deubiquitinates estrogen receptor alpha (ESR1). Mediates deubiquitination of 'Lys-48'-linked polyubiquitin chains, but not 'Lys-63'-linked polyubiquitin chains. Not able to cleave di-ubiquitin. Also capable of removing NEDD8 from NEDD8 conjugates, but with a much lower preference compared to 'Lys-48'-linked ubiquitin. Its function is as follows. Plays a key non-catalytic role in DNA repair regulation by inhibiting activity of RNF168, an E3 ubiquitin-protein ligase that promotes accumulation of 'Lys-63'-linked histone H2A and H2AX at DNA damage sites. Inhibits RNF168 independently of ubiquitin thioesterase activity by binding and inhibiting UBE2N/UBC13, the E2 partner of RNF168, thereby limiting spreading of 'Lys-63'-linked histone H2A and H2AX marks. Inhibition occurs by binding to free ubiquitin: free ubiquitin acts as an allosteric regulator that increases affinity for UBE2N/UBC13 and disrupts interaction with UBE2V1. The OTUB1-UBE2N/UBC13-free ubiquitin complex adopts a configuration that mimics a cleaved 'Lys48'-linked di-ubiquitin chain. Acts as a regulator of mTORC1 and mTORC2 complexes. When phosphorylated at Tyr-26, acts as an activator of the mTORC1 complex by mediating deubiquitination of RPTOR via a non-catalytic process: acts by binding and inhibiting the activity of the ubiquitin-conjugating enzyme E2 (UBE2D1/UBCH5A, UBE2W/UBC16 and UBE2N/UBC13), thereby preventing ubiquitination of RPTOR. Can also act as an inhibitor of the mTORC1 and mTORC2 complexes in response to amino acids by mediating non-catalytic deubiquitination of DEPTOR. The chain is Ubiquitin thioesterase OTUB1 (OTUB1) from Homo sapiens (Human).